Here is a 209-residue protein sequence, read N- to C-terminus: MLKTMRRHGITLALFAAGATGLTAVVNSLTENTIAHQAALQQKALLDQVVPAENYDNDMQAECYVVTDSALGNMAPHRLYLARKGNQPVAAAIETTAPDGYSGAIQLLVGADFHGNVLGSRVIEHHETPGLGDKIDIRISDWINHFSGQHVTGDDDKRWAVKKDGGSFDQFTGATITPRAVVRAVKNAALYLQTLPPQLSRLPSCGEDQ.

A helical membrane pass occupies residues 9-29 (GITLALFAAGATGLTAVVNSL). The residue at position 175 (Thr175) is an FMN phosphoryl threonine.

This sequence belongs to the RnfG family. As to quaternary structure, the complex is composed of six subunits: RnfA, RnfB, RnfC, RnfD, RnfE and RnfG. FMN is required as a cofactor.

The protein localises to the cell inner membrane. Part of a membrane-bound complex that couples electron transfer with translocation of ions across the membrane. This chain is Ion-translocating oxidoreductase complex subunit G, found in Yersinia pestis.